We begin with the raw amino-acid sequence, 533 residues long: MESERSQRMGNACIPLKRIAYCLCLLSALLLTEGKKPAKPKCPAVCTCTKDNALCENARSIPRTVPPDVISLLFTSNSFDVISDDAFIGLPHLEYLFIENNNIKSISRHTFRGLKSLIHLSLANNNLQTLPKDIFKGLDSLTNVDLRGNSFNCDCKLKWLVEWLSHTNATVEDIYCEGPPEYKKRKINSLSSKDFDCIITEFAKSQDLPYQSLSIDTFSYMNDEYVVIAQPFTGKCIFLEWDHVEKTFRNYDNITGTSTVVCKPIVIETQLYVIVAQLFGGSHIYKRDSFANKFIKIQDIEILKIRKPNDIETFKIENNWYFVVADSSKAGFTTIYKWNGNGFYSHQSLHAWYRDTDVEYLEIARTPQTLRTPHLILSSSSQRPVIYQWNKAIQLFTNQTDIPNMEDVYAVKHFSVKGDVYICLTRFIGDSKVMKWGGSSFQDIQRMPSRGSMVFQPLQINNYQYAILGSDYSFTQVYNWDAEKAKFVKFQELNVQAPRSFTHVSINKRNFLFASSFKGNTQIYKHVIVDLSA.

The signal sequence occupies residues 1–34 (MESERSQRMGNACIPLKRIAYCLCLLSALLLTEG). One can recognise an LRRNT domain in the interval 35–72 (KKPAKPKCPAVCTCTKDNALCENARSIPRTVPPDVISL). LRR repeat units lie at residues 92 to 113 (HLEY…TFRG) and 116 to 137 (SLIH…IFKG). Residues 149–199 (NSFNCDCKLKWLVEWLSHTNATVEDIYCEGPPEYKKRKINSLSSKDFDCII) enclose the LRRCT domain. A glycan (N-linked (GlcNAc...) asparagine) is linked at N168. EAR repeat units follow at residues 201–243 (EFAK…EWDH), 247–289 (TFRN…KRDS), 293–340 (KFIK…KWNG), 342–391 (GFYS…QWNK), 395–438 (LFTN…KWGG), 440–482 (SFQD…NWDA), and 486–528 (KFVK…KHVI). The N-linked (GlcNAc...) asparagine glycan is linked to N253. Residue N398 is glycosylated (N-linked (GlcNAc...) asparagine).

Oligomer. Interacts with KCNA1 within a complex containing KCNA1, KCNA4 and KCNAB1. Part of a complex containing ADAM22, DLG4/PSD95 and CACNG2 (stargazin). Can bind to ADAM11 and ADAM23. In terms of processing, glycosylated.

Its subcellular location is the secreted. It localises to the synapse. The protein resides in the cytoplasm. Functionally, regulates voltage-gated potassium channels assembled from KCNA1, KCNA4 and KCNAB1. It slows down channel inactivation by precluding channel closure mediated by the KCNAB1 subunit. Ligand for ADAM22 that positively regulates synaptic transmission mediated by AMPA-type glutamate receptors. Plays a role in suppressing the production of MMP1/3 through the phosphatidylinositol 3-kinase/ERK pathway. This is Leucine-rich glioma-inactivated protein 1 (LGI1) from Bos taurus (Bovine).